Here is a 475-residue protein sequence, read N- to C-terminus: tRNA-2-methylthio-N(6)-dimethylallyladenosine synthase (475 aa).

Residues 1–10 (MQETTVKRDG) are compositionally biased toward basic and acidic residues. The tract at residues 1–22 (MQETTVKRDGASPSDAGTPATT) is disordered. One can recognise an MTTase N-terminal domain in the interval 27–144 (GKLYIRTFGC…LPDLIKRRRA (118 aa)). Cys-36, Cys-73, Cys-107, Cys-181, Cys-185, and Cys-188 together coordinate [4Fe-4S] cluster. Residues 167–400 (RVDGATAFVS…QALINQQAAA (234 aa)) form the Radical SAM core domain. One can recognise a TRAM domain in the interval 403-466 (QGMIGTRQRV…TNSLRGRVAG (64 aa)).

The protein belongs to the methylthiotransferase family. MiaB subfamily. Monomer. Requires [4Fe-4S] cluster as cofactor.

The protein resides in the cytoplasm. The enzyme catalyses N(6)-dimethylallyladenosine(37) in tRNA + (sulfur carrier)-SH + AH2 + 2 S-adenosyl-L-methionine = 2-methylsulfanyl-N(6)-dimethylallyladenosine(37) in tRNA + (sulfur carrier)-H + 5'-deoxyadenosine + L-methionine + A + S-adenosyl-L-homocysteine + 2 H(+). Functionally, catalyzes the methylthiolation of N6-(dimethylallyl)adenosine (i(6)A), leading to the formation of 2-methylthio-N6-(dimethylallyl)adenosine (ms(2)i(6)A) at position 37 in tRNAs that read codons beginning with uridine. The sequence is that of tRNA-2-methylthio-N(6)-dimethylallyladenosine synthase from Bordetella parapertussis (strain 12822 / ATCC BAA-587 / NCTC 13253).